The primary structure comprises 401 residues: MSLRQLLLRLSGYLGASGPPNRHWWYFRSLDTISSVGSWRGRSSRSPAHWNQVVSEAEKIVGYPASFMSLRCLLSDELSNVAMQVRKLVGTQHPLLTTARGFVHDSRHNLQLRGLVVLLISKAAGPSTRNSSSQNYDMVSGIYSCQRNLAEITELIHTALLVHRGIVNLSELQSSDGPLKDMKFGNKIAVLSGDFLLANACNGLALLQNTKVVELLASALMDLVQGIYQENSASTQGNPIPDDIRISTWKEQTFLSHCALLAKSCKAAMELAKHDAAVQDMAFQYGKHMAMSHKINSDLQPFIKDKASDSKTFNLNSAPVVLHQEFLGRDLWIKQIGEAQEKGRLNYTKLRETIKAGKGVTSAIDLCRYHGNKALEALESFPPSEARSALENIVFAVTRFS.

Belongs to the FPP/GGPP synthase family. In terms of assembly, heterotetramer composed of 2 PDSS1/DPS1 and 2 PDSS2/DLP1 subunits.

It localises to the mitochondrion. The catalysed reaction is 7 isopentenyl diphosphate + (2E,6E)-farnesyl diphosphate = all-trans-decaprenyl diphosphate + 7 diphosphate. It carries out the reaction 6 isopentenyl diphosphate + (2E,6E)-farnesyl diphosphate = all-trans-nonaprenyl diphosphate + 6 diphosphate. It functions in the pathway cofactor biosynthesis; ubiquinone biosynthesis. Its function is as follows. Heterotetrameric enzyme that catalyzes the condensation of farnesyl diphosphate (FPP), which acts as a primer, and isopentenyl diphosphate (IPP) to produce prenyl diphosphates of varying chain lengths and participates in the determination of the side chain of ubiquinone. Supplies nona and decaprenyl diphosphate, the precursors for the side chain of the isoprenoid quinones ubiquinone-9 (Q9) and ubiquinone-10 (Q10) respectively. The enzyme adds isopentenyl diphosphate molecules sequentially to farnesyl diphosphate with trans stereochemistry. May play a role during cerebellar development. May regulate mitochondrial respiratory chain function. The chain is All trans-polyprenyl-diphosphate synthase PDSS2 from Rattus norvegicus (Rat).